The sequence spans 316 residues: Thymidylate synthase (316 aa).

DUMP-binding positions include R23 and 178–179; that span reads RR. C198 serves as the catalytic Nucleophile. DUMP contacts are provided by residues 218 to 221, N229, and 259 to 261; these read RSGD and HIY. Position 221 (D221) interacts with (6R)-5,10-methylene-5,6,7,8-tetrahydrofolate. A315 is a (6R)-5,10-methylene-5,6,7,8-tetrahydrofolate binding site.

This sequence belongs to the thymidylate synthase family. Bacterial-type ThyA subfamily. As to quaternary structure, homodimer.

The protein localises to the cytoplasm. The catalysed reaction is dUMP + (6R)-5,10-methylene-5,6,7,8-tetrahydrofolate = 7,8-dihydrofolate + dTMP. The protein operates within pyrimidine metabolism; dTTP biosynthesis. In terms of biological role, catalyzes the reductive methylation of 2'-deoxyuridine-5'-monophosphate (dUMP) to 2'-deoxythymidine-5'-monophosphate (dTMP) while utilizing 5,10-methylenetetrahydrofolate (mTHF) as the methyl donor and reductant in the reaction, yielding dihydrofolate (DHF) as a by-product. This enzymatic reaction provides an intracellular de novo source of dTMP, an essential precursor for DNA biosynthesis. This chain is Thymidylate synthase, found in Latilactobacillus sakei subsp. sakei (strain 23K) (Lactobacillus sakei subsp. sakei).